The chain runs to 53 residues: Large ribosomal subunit protein eL40 (53 aa).

This sequence belongs to the eukaryotic ribosomal protein eL40 family.

In Pyrobaculum calidifontis (strain DSM 21063 / JCM 11548 / VA1), this protein is Large ribosomal subunit protein eL40.